A 260-amino-acid chain; its full sequence is Capsid protein (260 aa).

Positions 3 to 20 (KRPGDIIISTPVSKVRRR) match the Bipartite nuclear localization signal motif. The Nuclear localization signal motif lies at 41 to 55 (KRRSWTYRPMYRKPR). A zinc finger lies at 69–86 (CEGPCKVQSYEQRDDIKH). Positions 102–123 (ITHRVGKRFCVKSIYFLGKVWM) match the Nuclear export signal motif. A Bipartite nuclear localization signal motif is present at residues 202–251 (KRFFKINSHVTLFIFIQEAAKYENHTENALLLYMACTHASNPVYATMKIR).

It belongs to the geminiviridae capsid protein family. In terms of assembly, homomultimer. Binds to single-stranded and double-stranded viral DNA. Interacts (via nuclear localization signals) with host importin alpha-1a.

The protein resides in the virion. Its subcellular location is the host nucleus. In terms of biological role, encapsidates the viral genome into characteristic twinned ('geminate') particles. Binds the genomic viral ssDNA and shuttles it into and out of the cell nucleus. Plays a role in protection of the genome from degradation, virus acquisition and transmission by insect vectors, infectivity, and systemic movement. The CP of monopartite geminiviruses is absolutely essential for virus movement. This is Capsid protein from Cynanchum acutum (Little mallow).